The sequence spans 389 residues: MAATTAETRVFLEVRGQLQSALLILGEPKEGGMPMNISIMPSSLQMKTPEGCTEIQLPAEVRLVPSSCRGLQFVAGDGLHLRLQAHAELGTKLISMFNQSLQAQECCTFYCQSCGEVIINDRKLLRVLPLPSENWGALVGEWCCHPDPFANKPLHPQENDCFIGDSFFLVNLRTSLWQQRPELSPVEMCCVSSDNHCKLEPKANTKVICKRCKVMLGETVSSETTKFYMTEIIIQSSERSFPIIPRPRFVQSVIAQCLVQLSSARSTFRFMIQGQDDKVYILLWLLNSDSLVIESLRNSKYIKKFPLLEDTLKADSSSAWSAVKVLYQPCIKSRNEKLISSWESDISVHSLTLPSATCLELLLILSKSNANLPSSLRHMNSFQVAFLKI.

Ala2 bears the N-acetylalanine mark. Positions 129-159 (PLPSENWGALVGEWCCHPDPFANKPLHPQEN) match the BRAT1-like motif motif. A Zn(2+)-binding site is contributed by Cys144. The interval 235–257 (QSSERSFPIIPRPRFVQSVIAQC) is interaction with UBE2C. Residues 353-389 (LPSATCLELLLILSKSNANLPSSLRHMNSFQVAFLKI) are HECT-like.

Interacts with UBE2C/UbcH10 (E2 ubiquitin-conjugating enzyme). In vitro, interacts with cyclin-B. In terms of processing, ubiquitinated by UBCH10 (E2 ubiquitin-conjugating enzyme).

The protein localises to the cytoplasm. The enzyme catalyses S-ubiquitinyl-[E2 ubiquitin-conjugating enzyme]-L-cysteine + [acceptor protein]-L-lysine = [E2 ubiquitin-conjugating enzyme]-L-cysteine + N(6)-ubiquitinyl-[acceptor protein]-L-lysine.. It functions in the pathway protein modification; protein ubiquitination. E3 ubiquitin-protein ligase which accepts ubiquitin from specific E2 ubiquitin-conjugating enzymes, and transfers it to substrates, generally promoting their degradation by the proteasome. Independently of its E3 ubiquitin-protein ligase activity, acts as an inhibitor of CPSF3 endonuclease activity by blocking CPSF3 active site. The protein is E3 ubiquitin-protein ligase E3D (UBE3D) of Pongo abelii (Sumatran orangutan).